We begin with the raw amino-acid sequence, 422 residues long: Tryptophan synthase beta chain 2 (422 aa).

At lysine 111 the chain carries N6-(pyridoxal phosphate)lysine.

This sequence belongs to the TrpB family. Tetramer of two alpha and two beta chains. Requires pyridoxal 5'-phosphate as cofactor.

It carries out the reaction (1S,2R)-1-C-(indol-3-yl)glycerol 3-phosphate + L-serine = D-glyceraldehyde 3-phosphate + L-tryptophan + H2O. It participates in amino-acid biosynthesis; L-tryptophan biosynthesis; L-tryptophan from chorismate: step 5/5. Its function is as follows. The beta subunit is responsible for the synthesis of L-tryptophan from indole and L-serine. The sequence is that of Tryptophan synthase beta chain 2 (trpB2) from Thermotoga maritima (strain ATCC 43589 / DSM 3109 / JCM 10099 / NBRC 100826 / MSB8).